Consider the following 82-residue polypeptide: Small ribosomal subunit protein uS17 (82 aa).

The protein belongs to the universal ribosomal protein uS17 family. Part of the 30S ribosomal subunit.

One of the primary rRNA binding proteins, it binds specifically to the 5'-end of 16S ribosomal RNA. In Afipia carboxidovorans (strain ATCC 49405 / DSM 1227 / KCTC 32145 / OM5) (Oligotropha carboxidovorans), this protein is Small ribosomal subunit protein uS17.